A 455-amino-acid polypeptide reads, in one-letter code: tRNA modification GTPase MnmE (455 aa).

Residues Arg-26, Glu-86, and Arg-125 each coordinate (6S)-5-formyl-5,6,7,8-tetrahydrofolate. The 155-residue stretch at 222-376 (GLKTAIIGRP…VEEKINQIFF (155 aa)) folds into the TrmE-type G domain. Asn-232 is a K(+) binding site. Residues 232-237 (NVGKSS), 251-257 (TDIAGTT), and 276-279 (DTAG) contribute to the GTP site. Ser-236 is a binding site for Mg(2+). Residues Thr-251, Ile-253, and Thr-256 each coordinate K(+). Position 257 (Thr-257) interacts with Mg(2+). Residue Lys-455 participates in (6S)-5-formyl-5,6,7,8-tetrahydrofolate binding.

Belongs to the TRAFAC class TrmE-Era-EngA-EngB-Septin-like GTPase superfamily. TrmE GTPase family. As to quaternary structure, homodimer. Heterotetramer of two MnmE and two MnmG subunits. K(+) serves as cofactor.

It localises to the cytoplasm. Its function is as follows. Exhibits a very high intrinsic GTPase hydrolysis rate. Involved in the addition of a carboxymethylaminomethyl (cmnm) group at the wobble position (U34) of certain tRNAs, forming tRNA-cmnm(5)s(2)U34. This Lactococcus lactis subsp. cremoris (strain SK11) protein is tRNA modification GTPase MnmE.